The sequence spans 125 residues: UPF0102 protein PA4424 (125 aa).

This sequence belongs to the UPF0102 family.

The polypeptide is UPF0102 protein PA4424 (Pseudomonas aeruginosa (strain ATCC 15692 / DSM 22644 / CIP 104116 / JCM 14847 / LMG 12228 / 1C / PRS 101 / PAO1)).